The primary structure comprises 782 residues: Beta-mannosyltransferase 9 (782 aa).

At 1-26 (MEKLIQSTISLFISLSLKISTKSYKS) the chain is on the cytoplasmic side. A helical transmembrane segment spans residues 27–47 (IISILFIISLLSIILTTTITV). Residues 48–782 (YHDPERIITT…GKDKGKDKSN (735 aa)) are Extracellular-facing. The disordered stretch occupies residues 66 to 96 (KSVFTASSPKQQDKLQQEIDQHQSDNSHEQQ). Basic and acidic residues predominate over residues 76 to 96 (QQDKLQQEIDQHQSDNSHEQQ). N-linked (GlcNAc...) asparagine glycosylation is found at Asn-445, Asn-648, and Asn-699.

The protein belongs to the BMT family.

The protein localises to the membrane. Its function is as follows. Beta-mannosyltransferase involved in cell wall biosynthesis through beta-1,2-mannosylation of cell wall phosphopeptidomannan. The polypeptide is Beta-mannosyltransferase 9 (BMT9) (Candida albicans (strain SC5314 / ATCC MYA-2876) (Yeast)).